A 427-amino-acid chain; its full sequence is Probable G-protein coupled receptor 150 (427 aa).

Residues 1-3 (MED) are Extracellular-facing. A helical transmembrane segment spans residues 4 to 24 (PFSLAILNPASNLSVPTQPSW). The Cytoplasmic portion of the chain corresponds to 25-50 (SLNLTSEQGASVPGPHSPPRGPPSHR). The helical transmembrane segment at 51–71 (IHLVFLGIILVAAVAGNTTVL) threads the bilayer. Topologically, residues 72-89 (CRLCGGSSGPWPGPKRRK) are extracellular. A helical membrane pass occupies residues 90-110 (MDFLLVQLAAADLYASGGTAL). Over 111–170 (SQLAWELLGDPRPALGDLACRLSHLLQASGRGASAHLVALIALERQLAVRIPQGPQLPAR) the chain is Cytoplasmic. A helical transmembrane segment spans residues 171–191 (ALAALSWLLALLLALPPTFVV). Residues 192–230 (RWDAPPSSTANAWPGKHCCRGIFAPLPRWHLQVYALYEA) lie on the Extracellular side of the membrane. The helical transmembrane segment at 231 to 251 (IVGFAAPVALLGFSCGHLLCV) threads the bilayer. The Cytoplasmic portion of the chain corresponds to 252-286 (WWQRGSQAPVARMPWSPSMARASLPSALPQAKVQS). Residues 287–307 (LKMSLALALLFVGCDLPYFAA) form a helical membrane-spanning segment. The Extracellular portion of the chain corresponds to 308–327 (RLAAAWSSKPAGDWERESLV). A helical membrane pass occupies residues 328 to 348 (AAMRVLEVANSAINPLIYLFF). The Cytoplasmic segment spans residues 349 to 427 (QAGDCRLWRR…PPPCSCESAF (79 aa)). Positions 402–427 (EERNQGCLRPPPPRPRPPPCSCESAF) are disordered. Residues 410 to 421 (RPPPPRPRPPPC) show a composition bias toward pro residues.

It belongs to the G-protein coupled receptor 1 family.

Its subcellular location is the cell membrane. Its function is as follows. Orphan receptor. In Mus musculus (Mouse), this protein is Probable G-protein coupled receptor 150 (Gpr150).